Consider the following 393-residue polypeptide: Elongation factor Tu (393 aa).

Positions 10 to 203 constitute a tr-type G domain; the sequence is KPHVNIGTIG…AVDNYIPTPV (194 aa). The G1 stretch occupies residues 19–26; that stretch reads GHVDHGKT. Residue 19-26 coordinates GTP; it reads GHVDHGKT. Thr-26 provides a ligand contact to Mg(2+). Positions 60 to 64 are G2; that stretch reads GITIS. A G3 region spans residues 81 to 84; sequence DCPG. GTP-binding positions include 81 to 85 and 136 to 139; these read DCPGH and NKVD. The tract at residues 136-139 is G4; the sequence is NKVD. The tract at residues 173–175 is G5; sequence SAL.

Belongs to the TRAFAC class translation factor GTPase superfamily. Classic translation factor GTPase family. EF-Tu/EF-1A subfamily. Monomer.

The protein localises to the cytoplasm. The enzyme catalyses GTP + H2O = GDP + phosphate + H(+). Its function is as follows. GTP hydrolase that promotes the GTP-dependent binding of aminoacyl-tRNA to the A-site of ribosomes during protein biosynthesis. This chain is Elongation factor Tu, found in Chloroherpeton thalassium (strain ATCC 35110 / GB-78).